The chain runs to 360 residues: MYCLLRRLLFLLPPEWVHKLVFAVLRGATAATPVRRMLTRWLGPTDPVLASTVFGVRFPGPLGLAAGFDKDGTGLDTWAAMGFGYAEVGTVTAHPQPGNPAPRLFRLPEDRALLNRMGFNNHGAGALAIRLACHHPEVPVGVNIGKTKTTPADQAVDDYRASARLVGPLASYLVVNVSSPNTPGLRDLQAVESLRPILAAVLAETSTPVLVKIAPDLSDSDVDEVADLAVELGLAGIVATNTTVSRDGLLTPGVGQLGAGGISGPPVAERSLEVLRRLYQRVGDRLTLISVGGIETAEDAWDRITAGASLLQGYTGFIYGGGLWSKHIHDGIARRLHQGGFGSLHEAVGSNAAERGRPPS.

FMN-binding positions include 66-70 (AGFDK) and threonine 90. Lysine 70 lines the substrate pocket. 115–119 (NRMGF) provides a ligand contact to substrate. Residues asparagine 143 and asparagine 176 each contribute to the FMN site. Asparagine 176 serves as a coordination point for substrate. The active-site Nucleophile is serine 179. Asparagine 181 provides a ligand contact to substrate. FMN is bound by residues lysine 212 and threonine 240. 241 to 242 (NT) lines the substrate pocket. FMN is bound by residues glycine 264, glycine 293, and 314 to 315 (YT).

Belongs to the dihydroorotate dehydrogenase family. Type 2 subfamily. As to quaternary structure, monomer. It depends on FMN as a cofactor.

It localises to the cell membrane. It carries out the reaction (S)-dihydroorotate + a quinone = orotate + a quinol. The protein operates within pyrimidine metabolism; UMP biosynthesis via de novo pathway; orotate from (S)-dihydroorotate (quinone route): step 1/1. Catalyzes the conversion of dihydroorotate to orotate with quinone as electron acceptor. This chain is Dihydroorotate dehydrogenase (quinone), found in Mycobacterium ulcerans (strain Agy99).